The primary structure comprises 507 residues: ATP synthase subunit alpha, chloroplastic (507 aa).

170 to 177 (GDRQTGKT) is a binding site for ATP.

The protein belongs to the ATPase alpha/beta chains family. As to quaternary structure, F-type ATPases have 2 components, CF(1) - the catalytic core - and CF(0) - the membrane proton channel. CF(1) has five subunits: alpha(3), beta(3), gamma(1), delta(1), epsilon(1). CF(0) has four main subunits: a, b, b' and c.

Its subcellular location is the plastid. It is found in the chloroplast thylakoid membrane. It carries out the reaction ATP + H2O + 4 H(+)(in) = ADP + phosphate + 5 H(+)(out). In terms of biological role, produces ATP from ADP in the presence of a proton gradient across the membrane. The alpha chain is a regulatory subunit. The protein is ATP synthase subunit alpha, chloroplastic of Huperzia lucidula (Shining clubmoss).